Consider the following 112-residue polypeptide: Large ribosomal subunit protein bL17 (112 aa).

The protein belongs to the bacterial ribosomal protein bL17 family. As to quaternary structure, part of the 50S ribosomal subunit. Contacts protein L32.

This Moorella thermoacetica (strain ATCC 39073 / JCM 9320) protein is Large ribosomal subunit protein bL17.